The following is a 127-amino-acid chain: Small ribosomal subunit protein uS13 (127 aa).

A disordered region spans residues 97-127; the sequence is PVRGQRTKTNARTRKGPRKTVAGKKGVKDLR. The span at 101-118 shows a compositional bias: basic residues; that stretch reads QRTKTNARTRKGPRKTVA.

The protein belongs to the universal ribosomal protein uS13 family. As to quaternary structure, part of the 30S ribosomal subunit. Forms a loose heterodimer with protein S19. Forms two bridges to the 50S subunit in the 70S ribosome.

Its function is as follows. Located at the top of the head of the 30S subunit, it contacts several helices of the 16S rRNA. In the 70S ribosome it contacts the 23S rRNA (bridge B1a) and protein L5 of the 50S subunit (bridge B1b), connecting the 2 subunits; these bridges are implicated in subunit movement. Contacts the tRNAs in the A and P-sites. The chain is Small ribosomal subunit protein uS13 from Rhodopirellula baltica (strain DSM 10527 / NCIMB 13988 / SH1).